Reading from the N-terminus, the 223-residue chain is Cytidylate kinase (223 aa).

An ATP-binding site is contributed by 12 to 20; that stretch reads GPSGVGKGT.

The protein belongs to the cytidylate kinase family. Type 1 subfamily.

It localises to the cytoplasm. The enzyme catalyses CMP + ATP = CDP + ADP. The catalysed reaction is dCMP + ATP = dCDP + ADP. In Xylella fastidiosa (strain M12), this protein is Cytidylate kinase.